We begin with the raw amino-acid sequence, 312 residues long: Pantothenate kinase (312 aa).

Residue 92–99 (GSVAVGKS) coordinates ATP.

This sequence belongs to the prokaryotic pantothenate kinase family.

The protein resides in the cytoplasm. It carries out the reaction (R)-pantothenate + ATP = (R)-4'-phosphopantothenate + ADP + H(+). Its pathway is cofactor biosynthesis; coenzyme A biosynthesis; CoA from (R)-pantothenate: step 1/5. The sequence is that of Pantothenate kinase (coaA) from Vibrio cholerae serotype O1 (strain ATCC 39315 / El Tor Inaba N16961).